The primary structure comprises 284 residues: Ribosomal RNA small subunit methyltransferase A (284 aa).

The S-adenosyl-L-methionine site is built by Asn-22, Leu-24, Gly-49, Glu-70, Asp-97, and Asn-117.

Belongs to the class I-like SAM-binding methyltransferase superfamily. rRNA adenine N(6)-methyltransferase family. RsmA subfamily.

It is found in the cytoplasm. It carries out the reaction adenosine(1518)/adenosine(1519) in 16S rRNA + 4 S-adenosyl-L-methionine = N(6)-dimethyladenosine(1518)/N(6)-dimethyladenosine(1519) in 16S rRNA + 4 S-adenosyl-L-homocysteine + 4 H(+). Functionally, specifically dimethylates two adjacent adenosines (A1518 and A1519) in the loop of a conserved hairpin near the 3'-end of 16S rRNA in the 30S particle. May play a critical role in biogenesis of 30S subunits. The protein is Ribosomal RNA small subunit methyltransferase A of Desulforapulum autotrophicum (strain ATCC 43914 / DSM 3382 / VKM B-1955 / HRM2) (Desulfobacterium autotrophicum).